A 344-amino-acid chain; its full sequence is Phenylalanine--tRNA ligase alpha subunit (344 aa).

Residue Glu-258 coordinates Mg(2+).

The protein belongs to the class-II aminoacyl-tRNA synthetase family. Phe-tRNA synthetase alpha subunit type 1 subfamily. As to quaternary structure, tetramer of two alpha and two beta subunits. The cofactor is Mg(2+).

It localises to the cytoplasm. The catalysed reaction is tRNA(Phe) + L-phenylalanine + ATP = L-phenylalanyl-tRNA(Phe) + AMP + diphosphate + H(+). The polypeptide is Phenylalanine--tRNA ligase alpha subunit (Thiobacillus denitrificans (strain ATCC 25259 / T1)).